Here is a 157-residue protein sequence, read N- to C-terminus: MSSSIREEVHRHLGTVALMQPALHQQTHAPAPTEITHTLFRAYTRVPHDVGGEADVPIEYHEKEEEIWELNTFATCECLAWRGVWTAEERRRKQNCDVGQTVYLGMPYYGRWLLTAARILVDKQFVTLTELHNKIVEMRERVASGQGLGEYLPPKAK.

As to quaternary structure, heterododecamer consisting of 4 alpha, 4 beta, and 4 gamma subunits.

The enzyme catalyses thiocyanate + H2O + 2 H(+) = carbonyl sulfide + NH4(+). The protein operates within organosulfur degradation; thiocyanate degradation. In terms of biological role, involved in the degradation of thiocyanate. This Thiobacillus thioparus protein is Thiocyanate hydrolase subunit beta (scnB).